We begin with the raw amino-acid sequence, 1140 residues long: Kinesin-like protein KIN-14O (1140 aa).

Positions M1–F12 are enriched in basic and acidic residues. 4 disordered regions span residues M1–D37, N50–S81, S161–K217, and A323–D347. The span at S161–S179 shows a compositional bias: low complexity. The span at P180–F193 shows a compositional bias: basic and acidic residues. The segment covering L197–G209 has biased composition (polar residues). Positions S327–E546 form a coiled coil. Residues T332 to D347 are compositionally biased toward basic and acidic residues. Residues N632–V952 enclose the Kinesin motor domain. An ATP-binding site is contributed by G716–T723. Polar residues predominate over residues L1002 to S1018. 2 disordered regions span residues L1002–D1021 and D1028–S1140. Residues E1066–K1078 show a composition bias toward basic and acidic residues. Residues T1099–L1130 are compositionally biased toward polar residues.

This sequence belongs to the TRAFAC class myosin-kinesin ATPase superfamily. Kinesin family. KIN-14 subfamily.

The polypeptide is Kinesin-like protein KIN-14O (Arabidopsis thaliana (Mouse-ear cress)).